The primary structure comprises 1137 residues: Otoancorin (1137 aa).

An N-terminal signal peptide occupies residues 1 to 23 (MSQGPRTCSLLLVLLLSHGGAYQ). N156, N211, N244, N289, N321, N380, N384, N530, N594, N740, and N798 each carry an N-linked (GlcNAc...) asparagine glycan. Over residues 1095–1115 (HSWQTDPLSSSPTWPASTGSP) the composition is skewed to polar residues. The interval 1095 to 1119 (HSWQTDPLSSSPTWPASTGSPTGEP) is disordered. A lipid anchor (GPI-anchor amidated glycine) is attached at G1113. Positions 1114–1137 (SPTGEPASQALWLGCTLLLLTAKS) are cleaved as a propeptide — removed in mature form.

The protein belongs to the stereocilin family. Expressed in the inner ear and vestibule.

It localises to the apical cell membrane. Its subcellular location is the secreted. It is found in the extracellular space. The protein resides in the extracellular matrix. Functionally, may act as an adhesion molecule. The polypeptide is Otoancorin (Otoa) (Mus musculus (Mouse)).